A 286-amino-acid chain; its full sequence is MPELPEVEVVRRGLEDHMVGHTIVSATVLHPRAARNQLGGGPEIEANIAGLRVSAAKRRGKFLWLELIDAPSGETRPDLGLLVHLGMSGQMLIKEPDAPISPHLRAKIELDNGDEVWFVDQRTFGYWWLGDLVDGVPERVSHIATDVLDESADFSAIARNLKSRKSEIKRLLLNQEIVSGIGNIYADEMLWQAKIHPLQRADRLSLARLEELLQAGKDVMTKALAQGGTSFDALYVNVNGNSGYFSLSLNAYGQTGEPCGRCGTQIVRENFMNRGSHYCPNCQKRR.

The Schiff-base intermediate with DNA role is filled by proline 2. The Proton donor role is filled by glutamate 3. Lysine 61 acts as the Proton donor; for beta-elimination activity in catalysis. DNA contacts are provided by histidine 103, arginine 122, and arginine 164. The FPG-type zinc-finger motif lies at 250 to 284 (NAYGQTGEPCGRCGTQIVRENFMNRGSHYCPNCQK). Catalysis depends on arginine 274, which acts as the Proton donor; for delta-elimination activity.

It belongs to the FPG family. Monomer. It depends on Zn(2+) as a cofactor.

The enzyme catalyses Hydrolysis of DNA containing ring-opened 7-methylguanine residues, releasing 2,6-diamino-4-hydroxy-5-(N-methyl)formamidopyrimidine.. The catalysed reaction is 2'-deoxyribonucleotide-(2'-deoxyribose 5'-phosphate)-2'-deoxyribonucleotide-DNA = a 3'-end 2'-deoxyribonucleotide-(2,3-dehydro-2,3-deoxyribose 5'-phosphate)-DNA + a 5'-end 5'-phospho-2'-deoxyribonucleoside-DNA + H(+). In terms of biological role, involved in base excision repair of DNA damaged by oxidation or by mutagenic agents. Acts as a DNA glycosylase that recognizes and removes damaged bases. Has a preference for oxidized purines, such as 7,8-dihydro-8-oxoguanine (8-oxoG). Has AP (apurinic/apyrimidinic) lyase activity and introduces nicks in the DNA strand. Cleaves the DNA backbone by beta-delta elimination to generate a single-strand break at the site of the removed base with both 3'- and 5'-phosphates. The chain is Formamidopyrimidine-DNA glycosylase from Corynebacterium glutamicum (strain R).